Consider the following 673-residue polypeptide: Glycine--tRNA ligase beta subunit (673 aa).

The protein belongs to the class-II aminoacyl-tRNA synthetase family. As to quaternary structure, tetramer of two alpha and two beta subunits.

It is found in the cytoplasm. The enzyme catalyses tRNA(Gly) + glycine + ATP = glycyl-tRNA(Gly) + AMP + diphosphate. This is Glycine--tRNA ligase beta subunit from Lactococcus lactis subsp. cremoris (strain MG1363).